We begin with the raw amino-acid sequence, 172 residues long: NADH-ubiquinone oxidoreductase chain 6 (172 aa).

6 helical membrane-spanning segments follow: residues 1–21 (MLSL…VVVL), 25–45 (PYFS…IVLY), 48–68 (GTFL…VVFV), 86–106 (VIWF…MSFN), 108–128 (FFLD…IFGA), and 141–161 (LILV…LVVV).

Belongs to the complex I subunit 6 family.

Its subcellular location is the mitochondrion membrane. The catalysed reaction is a ubiquinone + NADH + 5 H(+)(in) = a ubiquinol + NAD(+) + 4 H(+)(out). Its function is as follows. Core subunit of the mitochondrial membrane respiratory chain NADH dehydrogenase (Complex I) that is believed to belong to the minimal assembly required for catalysis. Complex I functions in the transfer of electrons from NADH to the respiratory chain. The immediate electron acceptor for the enzyme is believed to be ubiquinone. The polypeptide is NADH-ubiquinone oxidoreductase chain 6 (MT-ND6) (Petromyzon marinus (Sea lamprey)).